The chain runs to 679 residues: Glycine--tRNA ligase beta subunit (679 aa).

It belongs to the class-II aminoacyl-tRNA synthetase family. In terms of assembly, tetramer of two alpha and two beta subunits.

Its subcellular location is the cytoplasm. The catalysed reaction is tRNA(Gly) + glycine + ATP = glycyl-tRNA(Gly) + AMP + diphosphate. The chain is Glycine--tRNA ligase beta subunit from Streptococcus equi subsp. zooepidemicus (strain H70).